We begin with the raw amino-acid sequence, 389 residues long: Succinate--CoA ligase [ADP-forming] subunit beta (389 aa).

The ATP-grasp domain occupies 9–236; it reads RDMFEAHGVP…KDSADPLEAK (228 aa). ATP-binding positions include Lys45, 52–54, Ala94, and Glu99; that span reads GRG. Mg(2+)-binding residues include Asn191 and Asp205. Substrate contacts are provided by residues Asn256 and 318-320; that span reads GIT.

This sequence belongs to the succinate/malate CoA ligase beta subunit family. Heterotetramer of two alpha and two beta subunits. Mg(2+) serves as cofactor.

It carries out the reaction succinate + ATP + CoA = succinyl-CoA + ADP + phosphate. The enzyme catalyses GTP + succinate + CoA = succinyl-CoA + GDP + phosphate. The protein operates within carbohydrate metabolism; tricarboxylic acid cycle; succinate from succinyl-CoA (ligase route): step 1/1. In terms of biological role, succinyl-CoA synthetase functions in the citric acid cycle (TCA), coupling the hydrolysis of succinyl-CoA to the synthesis of either ATP or GTP and thus represents the only step of substrate-level phosphorylation in the TCA. The beta subunit provides nucleotide specificity of the enzyme and binds the substrate succinate, while the binding sites for coenzyme A and phosphate are found in the alpha subunit. The chain is Succinate--CoA ligase [ADP-forming] subunit beta from Renibacterium salmoninarum (strain ATCC 33209 / DSM 20767 / JCM 11484 / NBRC 15589 / NCIMB 2235).